The chain runs to 59 residues: Pycsar effector protein MePycTM (59 aa).

A helical membrane pass occupies residues 36–56 (VAVAIYLLGAAMLSSGAAVLA).

The protein localises to the cell membrane. Its function is as follows. Pycsar (pyrimidine cyclase system for antiphage resistance) provides immunity against bacteriophage. The pyrimidine cyclase (PycC) synthesizes cyclic nucleotides in response to infection; these serve as specific second messenger signals. The signals activate the adjacent effector, leading to bacterial cell death and abortive phage infection. A clade D Pycsar system. Functionally, the effector gene of a two-gene Pycsar system. Expression of this and adjacent uridylate cyclase MePycC (AC A0A1C5G2V9) probably confers resistance to bacteriophage. The genes are probably only expressed in response to bacteriophage infection. Probably only responds to cUMP (produced by its cognate NTP cyclase), acts by impairing membrane integrity. The chain is Pycsar effector protein MePycTM from Micromonospora echinofusca.